Consider the following 163-residue polypeptide: 3-dehydroquinate dehydratase (163 aa).

The Proton acceptor role is filled by Y28. Substrate contacts are provided by N80, H86, and D93. H106 functions as the Proton donor in the catalytic mechanism. Substrate-binding positions include 107–108 (IS) and R117.

This sequence belongs to the type-II 3-dehydroquinase family. In terms of assembly, homododecamer.

The catalysed reaction is 3-dehydroquinate = 3-dehydroshikimate + H2O. The protein operates within metabolic intermediate biosynthesis; chorismate biosynthesis; chorismate from D-erythrose 4-phosphate and phosphoenolpyruvate: step 3/7. Functionally, catalyzes a trans-dehydration via an enolate intermediate. This is 3-dehydroquinate dehydratase from Bradyrhizobium sp. (strain BTAi1 / ATCC BAA-1182).